The primary structure comprises 217 residues: GTP-binding protein Rit2 (217 aa).

Residues 27–34 (GAGGVGKS), 74–78 (DTAGQ), and 133–136 (NKID) contribute to the GTP site.

It belongs to the small GTPase superfamily. Ras family. In terms of assembly, interacts with PLXNB3. Interacts with AFDN, the C-terminal domain of RALGDS and RLF, but not with RIN1 and PIK3CA. RLF binds exclusively to the active GTP-bound form. Binds calmodulin. Interacts with POU4F1 (via N-terminus); the interaction controls POU4F1 transactivation activity on some neuronal target genes. As to expression, expressed in ganglion cell layer (GCL), inner plexiform layer (IPL) and inner nuclear layer (INL) of the retina. Expressed in retinal ganglion cells (RGCs). Expressed in horizontal, bipolar and amacrine cells, but not Mueller glia, of the INL (at protein level). Neuron-specific. Expressed in ganglion cell layer (GCL) and inner plexiform layer (IPL).

It is found in the nucleus. The protein localises to the cell membrane. The catalysed reaction is GTP + H2O = GDP + phosphate + H(+). With respect to regulation, alternates between an inactive form bound to GDP and an active form bound to GTP. Functionally, binds and exchanges GTP and GDP. Binds and modulates the activation of POU4F1 as gene expression regulator. The chain is GTP-binding protein Rit2 (Rit2) from Mus musculus (Mouse).